A 347-amino-acid polypeptide reads, in one-letter code: NADH-ubiquinone oxidoreductase chain 2 (347 aa).

The next 11 helical transmembrane spans lie at 3 to 23, 25 to 45, 59 to 79, 96 to 116, 122 to 142, 149 to 169, 178 to 198, 201 to 221, 239 to 259, 274 to 294, and 326 to 346; these read PMILLMLLITILSGTSIVMMS, HWFLTWLGFEMNMMAMIPVLM, YFLTQATASMILVLGIIINLI, TLLTIALVMKLGLAPFHFWVP, VSLNSGLILLTWQKIAPLSLL, VNTNILLVMSLLSIMVGGWGG, IMAYSSIAHMGWMIMIMIYNP, SLLNLLIYILMTSSMFMLLMF, IITTTILIILLSLGGLPPLSG, DSVILPAVMAILALLNLFFYM, and MTSLISISIMALPLTPLAMIL.

The protein belongs to the complex I subunit 2 family. In terms of assembly, core subunit of respiratory chain NADH dehydrogenase (Complex I) which is composed of 45 different subunits. Interacts with TMEM242.

The protein localises to the mitochondrion inner membrane. The catalysed reaction is a ubiquinone + NADH + 5 H(+)(in) = a ubiquinol + NAD(+) + 4 H(+)(out). Its function is as follows. Core subunit of the mitochondrial membrane respiratory chain NADH dehydrogenase (Complex I) which catalyzes electron transfer from NADH through the respiratory chain, using ubiquinone as an electron acceptor. Essential for the catalytic activity and assembly of complex I. The sequence is that of NADH-ubiquinone oxidoreductase chain 2 from Sylvisorex johnstoni (Johnston's forest shrew).